The primary structure comprises 318 residues: Cobalamin biosynthesis protein CobD (318 aa).

Helical transmembrane passes span 51 to 71, 77 to 97, 153 to 173, 206 to 226, and 296 to 316; these read VGGV…AWGA, LVHP…CLAA, DGVI…ALAY, LIPA…AGLS, and MYGA…ILTI.

Belongs to the CobD/CbiB family.

The protein resides in the cell membrane. Its pathway is cofactor biosynthesis; adenosylcobalamin biosynthesis. Converts cobyric acid to cobinamide by the addition of aminopropanol on the F carboxylic group. The chain is Cobalamin biosynthesis protein CobD from Geobacter metallireducens (strain ATCC 53774 / DSM 7210 / GS-15).